The chain runs to 376 residues: tRNA-specific 2-thiouridylase MnmA (376 aa).

ATP-binding positions include 16–23 (AMSGGVDS) and L42. The active-site Nucleophile is the C111. C111 and C210 form a disulfide bridge. Residue G135 participates in ATP binding. An interaction with tRNA region spans residues 158 to 160 (KDQ). Catalysis depends on C210, which acts as the Cysteine persulfide intermediate.

The protein belongs to the MnmA/TRMU family.

It localises to the cytoplasm. It catalyses the reaction S-sulfanyl-L-cysteinyl-[protein] + uridine(34) in tRNA + AH2 + ATP = 2-thiouridine(34) in tRNA + L-cysteinyl-[protein] + A + AMP + diphosphate + H(+). Its function is as follows. Catalyzes the 2-thiolation of uridine at the wobble position (U34) of tRNA, leading to the formation of s(2)U34. The polypeptide is tRNA-specific 2-thiouridylase MnmA (Streptomyces coelicolor (strain ATCC BAA-471 / A3(2) / M145)).